A 318-amino-acid chain; its full sequence is Aspartate carbamoyltransferase catalytic subunit (318 aa).

Positions 59 and 60 each coordinate carbamoyl phosphate. An L-aspartate-binding site is contributed by K87. Positions 109, 137, and 140 each coordinate carbamoyl phosphate. 2 residues coordinate L-aspartate: R170 and R224. Carbamoyl phosphate contacts are provided by G265 and P266.

Belongs to the aspartate/ornithine carbamoyltransferase superfamily. ATCase family. As to quaternary structure, heterododecamer (2C3:3R2) of six catalytic PyrB chains organized as two trimers (C3), and six regulatory PyrI chains organized as three dimers (R2).

It carries out the reaction carbamoyl phosphate + L-aspartate = N-carbamoyl-L-aspartate + phosphate + H(+). It participates in pyrimidine metabolism; UMP biosynthesis via de novo pathway; (S)-dihydroorotate from bicarbonate: step 2/3. Functionally, catalyzes the condensation of carbamoyl phosphate and aspartate to form carbamoyl aspartate and inorganic phosphate, the committed step in the de novo pyrimidine nucleotide biosynthesis pathway. The protein is Aspartate carbamoyltransferase catalytic subunit of Rhizobium johnstonii (strain DSM 114642 / LMG 32736 / 3841) (Rhizobium leguminosarum bv. viciae).